The primary structure comprises 279 residues: Pantothenate synthetase (279 aa).

M27–H34 contributes to the ATP binding site. H34 functions as the Proton donor in the catalytic mechanism. A (R)-pantoate-binding site is contributed by Q58. Q58 provides a ligand contact to beta-alanine. G144–D147 is a binding site for ATP. A (R)-pantoate-binding site is contributed by Q150. Residues V173 and M181 to R184 contribute to the ATP site.

It belongs to the pantothenate synthetase family. As to quaternary structure, homodimer.

The protein localises to the cytoplasm. It carries out the reaction (R)-pantoate + beta-alanine + ATP = (R)-pantothenate + AMP + diphosphate + H(+). It participates in cofactor biosynthesis; (R)-pantothenate biosynthesis; (R)-pantothenate from (R)-pantoate and beta-alanine: step 1/1. Catalyzes the condensation of pantoate with beta-alanine in an ATP-dependent reaction via a pantoyl-adenylate intermediate. In Geobacter sp. (strain M21), this protein is Pantothenate synthetase.